Here is a 241-residue protein sequence, read N- to C-terminus: L-aspartate dehydrogenase (241 aa).

Residues Ala109 and Asn164 each contribute to the NAD(+) site. His193 is an active-site residue.

It belongs to the L-aspartate dehydrogenase family.

The catalysed reaction is L-aspartate + NADP(+) + H2O = oxaloacetate + NH4(+) + NADPH + H(+). It catalyses the reaction L-aspartate + NAD(+) + H2O = oxaloacetate + NH4(+) + NADH + H(+). The protein operates within cofactor biosynthesis; NAD(+) biosynthesis; iminoaspartate from L-aspartate (dehydrogenase route): step 1/1. Its function is as follows. Specifically catalyzes the NAD or NADP-dependent dehydrogenation of L-aspartate to iminoaspartate. This Thermotoga sp. (strain RQ2) protein is L-aspartate dehydrogenase.